Consider the following 198-residue polypeptide: 3-isopropylmalate dehydratase small subunit (198 aa).

It belongs to the LeuD family. LeuD type 1 subfamily. In terms of assembly, heterodimer of LeuC and LeuD.

It carries out the reaction (2R,3S)-3-isopropylmalate = (2S)-2-isopropylmalate. It participates in amino-acid biosynthesis; L-leucine biosynthesis; L-leucine from 3-methyl-2-oxobutanoate: step 2/4. Catalyzes the isomerization between 2-isopropylmalate and 3-isopropylmalate, via the formation of 2-isopropylmaleate. The polypeptide is 3-isopropylmalate dehydratase small subunit (Mycobacterium leprae (strain Br4923)).